The primary structure comprises 661 residues: 1-deoxy-D-xylulose-5-phosphate synthase (661 aa).

Residues His98 and 139–141 (AHS) contribute to the thiamine diphosphate site. Asp170 contributes to the Mg(2+) binding site. Thiamine diphosphate is bound by residues 171–172 (GA), Asn199, Tyr309, and Glu391. Asn199 contacts Mg(2+).

Belongs to the transketolase family. DXPS subfamily. Homodimer. Mg(2+) serves as cofactor. Requires thiamine diphosphate as cofactor.

The enzyme catalyses D-glyceraldehyde 3-phosphate + pyruvate + H(+) = 1-deoxy-D-xylulose 5-phosphate + CO2. It functions in the pathway metabolic intermediate biosynthesis; 1-deoxy-D-xylulose 5-phosphate biosynthesis; 1-deoxy-D-xylulose 5-phosphate from D-glyceraldehyde 3-phosphate and pyruvate: step 1/1. Functionally, catalyzes the acyloin condensation reaction between C atoms 2 and 3 of pyruvate and glyceraldehyde 3-phosphate to yield 1-deoxy-D-xylulose-5-phosphate (DXP). The protein is 1-deoxy-D-xylulose-5-phosphate synthase of Bradyrhizobium diazoefficiens (strain JCM 10833 / BCRC 13528 / IAM 13628 / NBRC 14792 / USDA 110).